Reading from the N-terminus, the 533-residue chain is Peptidyl-prolyl cis-trans isomerase-like 2 (533 aa).

The U-box domain occupies 38 to 111; that stretch reads KRLPFYCCSL…DEYFCPVTYK (74 aa). The region spanning 284-438 is the PPIase cyclophilin-type domain; that stretch reads KKSYARIITN…REIKIKQIQM (155 aa). The stretch at 443 to 519 forms a coiled coil; the sequence is FEEYQRRLKN…SNEGEELQKK (77 aa). The segment covering 454–477 has biased composition (basic and acidic residues); it reads LTHEANAERENEEMRKRREKEEKM. The tract at residues 454–533 is disordered; it reads LTHEANAERE…KTTFGNFDNF (80 aa). Residues 523–533 show a composition bias toward polar residues; that stretch reads TKTTFGNFDNF.

This sequence belongs to the cyclophilin-type PPIase family. PPIL2 subfamily.

Its subcellular location is the nucleus. It catalyses the reaction [protein]-peptidylproline (omega=180) = [protein]-peptidylproline (omega=0). The catalysed reaction is S-ubiquitinyl-[E2 ubiquitin-conjugating enzyme]-L-cysteine + [acceptor protein]-L-lysine = [E2 ubiquitin-conjugating enzyme]-L-cysteine + N(6)-ubiquitinyl-[acceptor protein]-L-lysine.. Its pathway is protein modification; protein ubiquitination. Its function is as follows. May catalyze the cis-trans isomerization of proline imidic peptide bonds in oligopeptides thereby assisting the folding of proteins. May also function as a chaperone, playing a role in intracellular transport of proteins. May also have a protein ubiquitin ligase activity acting as an E3 ubiquitin protein ligase or as a ubiquitin-ubiquitin ligase promoting elongation of ubiquitin chains on proteins. This chain is Peptidyl-prolyl cis-trans isomerase-like 2 (cyp14), found in Rhizopus delemar (strain RA 99-880 / ATCC MYA-4621 / FGSC 9543 / NRRL 43880) (Mucormycosis agent).